Consider the following 138-residue polypeptide: Basic phospholipase A2 BP-II (138 aa).

An N-terminal signal peptide occupies residues 1–16 (MRTLWIMAVLLVGVDG). Disulfide bonds link cysteine 42-cysteine 132, cysteine 44-cysteine 60, cysteine 59-cysteine 112, cysteine 65-cysteine 138, cysteine 66-cysteine 105, cysteine 73-cysteine 98, and cysteine 91-cysteine 103. The Ca(2+) site is built by glycine 45 and glycine 47. Residue histidine 63 is part of the active site. Aspartate 106 is a catalytic residue.

This sequence belongs to the phospholipase A2 family. Group II subfamily. K49 sub-subfamily. Exists as a monomer in both solution and crystal states. In the presence of SDS or probably in the presence of phospholipids, assembles to form SDS-resistant stable oligomers. The cofactor is Ca(2+). As to expression, expressed by the venom gland.

Its subcellular location is the secreted. It catalyses the reaction a 1,2-diacyl-sn-glycero-3-phosphocholine + H2O = a 1-acyl-sn-glycero-3-phosphocholine + a fatty acid + H(+). In terms of biological role, snake venom phospholipase A2 (PLA2) that shows anticoagulant activities, strong myolytic activity, infiltration of polymorphonuclear cells, and edema in stromal tissues. Induces cell death of Jurkat cells in a concentration-dependent manner. Shows a low phospholipase A2 activity. PLA2 catalyzes the calcium-dependent hydrolysis of the 2-acyl groups in 3-sn-phosphoglycerides. The chain is Basic phospholipase A2 BP-II from Protobothrops flavoviridis (Habu).